The following is a 199-amino-acid chain: Large ribosomal subunit protein mL51 (199 aa).

The transit peptide at 1–15 (MNSASISRLTSVIRT) directs the protein to the mitochondrion.

It belongs to the mitochondrion-specific ribosomal protein mL51 family. Component of the mitochondrial ribosome large subunit (39S) which comprises a 16S rRNA and about 50 distinct proteins.

Its subcellular location is the mitochondrion. The chain is Large ribosomal subunit protein mL51 (mrpl-51) from Caenorhabditis briggsae.